A 547-amino-acid polypeptide reads, in one-letter code: Chaperonin GroEL 1 (547 aa).

ATP contacts are provided by residues 30–33 (TLGP), Lys51, 87–91 (DGTTT), Gly415, and Asp496. Positions 525–547 (KPEPKSPAGGPGMGGMGGMDGMM) are disordered. Gly residues predominate over residues 533–547 (GGPGMGGMGGMDGMM).

It belongs to the chaperonin (HSP60) family. In terms of assembly, forms a cylinder of 14 subunits composed of two heptameric rings stacked back-to-back. Interacts with the co-chaperonin GroES.

Its subcellular location is the cytoplasm. It carries out the reaction ATP + H2O + a folded polypeptide = ADP + phosphate + an unfolded polypeptide.. Its function is as follows. Together with its co-chaperonin GroES, plays an essential role in assisting protein folding. The GroEL-GroES system forms a nano-cage that allows encapsulation of the non-native substrate proteins and provides a physical environment optimized to promote and accelerate protein folding. In Cereibacter sphaeroides (strain ATCC 17023 / DSM 158 / JCM 6121 / CCUG 31486 / LMG 2827 / NBRC 12203 / NCIMB 8253 / ATH 2.4.1.) (Rhodobacter sphaeroides), this protein is Chaperonin GroEL 1.